The chain runs to 283 residues: NAD kinase (283 aa).

D66 acts as the Proton acceptor in catalysis. NAD(+) contacts are provided by residues 66-67 (DG), 140-141 (ND), R151, R168, D170, and Q240.

Belongs to the NAD kinase family. A divalent metal cation is required as a cofactor.

The protein resides in the cytoplasm. The enzyme catalyses NAD(+) + ATP = ADP + NADP(+) + H(+). In terms of biological role, involved in the regulation of the intracellular balance of NAD and NADP, and is a key enzyme in the biosynthesis of NADP. Catalyzes specifically the phosphorylation on 2'-hydroxyl of the adenosine moiety of NAD to yield NADP. In Syntrophobacter fumaroxidans (strain DSM 10017 / MPOB), this protein is NAD kinase.